Here is a 202-residue protein sequence, read N- to C-terminus: Small ribosomal subunit protein uS4 (202 aa).

The S4 RNA-binding domain maps to 94–157 (SRLDNLVYRM…KDLPIVAAGA (64 aa)).

The protein belongs to the universal ribosomal protein uS4 family. In terms of assembly, part of the 30S ribosomal subunit. Contacts protein S5. The interaction surface between S4 and S5 is involved in control of translational fidelity.

In terms of biological role, one of the primary rRNA binding proteins, it binds directly to 16S rRNA where it nucleates assembly of the body of the 30S subunit. Its function is as follows. With S5 and S12 plays an important role in translational accuracy. This Malacoplasma penetrans (strain HF-2) (Mycoplasma penetrans) protein is Small ribosomal subunit protein uS4.